Consider the following 1292-residue polypeptide: Sorbin and SH3 domain-containing protein 1 (1292 aa).

Disordered regions lie at residues 1 to 29 (MSSECDGGSKAVMNGLAPGSNGQDKATAD), 73 to 158 (LRAS…AQPE), 214 to 275 (HLQR…SSPL), and 318 to 381 (REQQ…MDEV). The span at 74 to 89 (RASSSYRETPSSSPAS) shows a compositional bias: low complexity. T82 is modified (phosphothreonine). 2 positions are modified to phosphoserine: S86 and S89. Over residues 93–102 (TRQHESKPGL) the composition is skewed to basic and acidic residues. 6 positions are modified to phosphoserine: E105, L114, V137, S146, S242, and S259. The span at 114-128 (LSSSADANGNAQPSS) shows a compositional bias: polar residues. Pro residues predominate over residues 240–252 (SFSPPPPLVPPAP). Residues 266-275 (AVSSTDSSPL) are compositionally biased toward polar residues. Residue S341 is modified to Phosphoserine. T344 carries the phosphothreonine modification. 2 positions are modified to phosphoserine: E346 and S350. The segment covering 354 to 365 (AIEKRAKDDSRR) has biased composition (basic and acidic residues). Positions 366 to 469 (VVKSTQDLSD…YSPRYSFSED (104 aa)) constitute a SoHo domain. Phosphoserine occurs at positions 369, 374, and 387. The interval 405 to 534 (LNRDTPEENP…TRKYRAEPKS (130 aa)) is disordered. Over residues 437–450 (YTPTYQFPASTPSP) the composition is skewed to polar residues. Phosphoserine occurs at positions 452, 465, 469, 472, 478, and 481. Basic and acidic residues predominate over residues 510 to 534 (SSERNDWEPPDKKVDTRKYRAEPKS). The residue at position 536 (Y536) is a Phosphotyrosine; by ABL1. Phosphoserine occurs at positions 556, 603, 609, and 640. The segment at 628–650 (APSANVPQSSAISPTPEISSETP) is disordered. At Y654 the chain carries Phosphotyrosine; by ABL1. A phosphoserine mark is found at S665 and K700. Residues 692-716 (PLQGLSGLKRPSSSASTKDSESPRH) are disordered. T708 carries the post-translational modification Phosphothreonine. 4 positions are modified to phosphoserine: S713, I730, D735, and I765. Positions 793-852 (SEMRPARAKFDFKAQTLKELPLQKGDIVYIYKQIDQNWYEGEHHGRVGIFPRTYIELLPP) constitute an SH3 1 domain. T862 is modified (phosphothreonine). Positions 867–928 (LEYGEAIAKF…PITYVDVIKR (62 aa)) constitute an SH3 2 domain. V923 is subject to Phosphoserine. Y937 carries the post-translational modification Phosphotyrosine. Low complexity predominate over residues 944-954 (SSPSRSATASP). Disordered stretches follow at residues 944 to 976 (SSPSRSATASPQFSSHSKLITPAPSSLPHSRRA), 1041 to 1064 (SDRPTPRSVASPLALPSPHKTYSL), 1106 to 1150 (QLSD…KKSC), and 1162 to 1230 (TEQR…SQTS). Phosphoserine occurs at positions 945 and 953. Residues 955–971 (QFSSHSKLITPAPSSLP) are compositionally biased toward polar residues. Over residues 1106-1117 (QLSDAFSSQSKR) the composition is skewed to polar residues. A compositionally biased stretch (basic and acidic residues) spans 1119–1136 (PWREESGQYERKAERGAG). Residues 1162 to 1172 (TEQRLSDLNTP) are compositionally biased toward polar residues. A compositionally biased stretch (basic and acidic residues) spans 1192–1203 (QTERHRGGEQAG). The span at 1211–1230 (GSQQPQAQQRRVTPDRSQTS) shows a compositional bias: polar residues. Phosphoserine is present on Q1213. An SH3 3 domain is found at 1231 to 1292 (QDLFSYQALY…PGNYVKPLYL (62 aa)). Position 1240 is a phosphotyrosine; by ABL1 (Y1240).

Interacts (via third SH3 domain) with the Ten-1 ICD form of TENM1; the interaction induces the translocation of SORBS1 to the nucleus. Interacts with INSM1. Interacts with the long isoform of AFDN and with VCL. AFDN and VCL bind to SORBS1 in a competitive manner and do not form a ternary complex. Interacts with ABL1, CBL, CBLB and INPPL1/SHIP2 through the third SH3 domain. Interaction with ABL1 occurs only after insulin stimulation while this has no effect on the interaction with INPPL1. Interacts with the insulin receptor but dissociates from it following insulin stimulation. Also interacts with SCA7, PTK2/FAK1 and flotillin. Interacts (via SH3 domain 2) with PXN. In terms of processing, O-glycosylated. As to expression, detected in skeletal muscle (at protein level). Widely expressed with highest levels in heart and skeletal muscle.

It is found in the cell junction. Its subcellular location is the adherens junction. The protein localises to the cell membrane. The protein resides in the cytoplasm. It localises to the cytoskeleton. It is found in the focal adhesion. Its subcellular location is the nucleus. The protein localises to the nucleus matrix. Its function is as follows. Plays a role in tyrosine phosphorylation of CBL by linking CBL to the insulin receptor. Required for insulin-stimulated glucose transport. Involved in formation of actin stress fibers and focal adhesions. The polypeptide is Sorbin and SH3 domain-containing protein 1 (Homo sapiens (Human)).